Reading from the N-terminus, the 386-residue chain is DNA-directed RNA polymerase subunit Rpo1C (386 aa).

Belongs to the RNA polymerase beta' chain family. Part of the RNA polymerase complex.

The protein localises to the cytoplasm. It catalyses the reaction RNA(n) + a ribonucleoside 5'-triphosphate = RNA(n+1) + diphosphate. Functionally, DNA-dependent RNA polymerase (RNAP) catalyzes the transcription of DNA into RNA using the four ribonucleoside triphosphates as substrates. Forms part of the jaw domain. The sequence is that of DNA-directed RNA polymerase subunit Rpo1C from Methanococcus maripaludis (strain DSM 14266 / JCM 13030 / NBRC 101832 / S2 / LL).